The following is a 190-amino-acid chain: Nucleoside triphosphate pyrophosphatase (190 aa).

Catalysis depends on Asp69, which acts as the Proton acceptor.

This sequence belongs to the Maf family. It depends on a divalent metal cation as a cofactor.

It localises to the cytoplasm. It carries out the reaction a ribonucleoside 5'-triphosphate + H2O = a ribonucleoside 5'-phosphate + diphosphate + H(+). It catalyses the reaction a 2'-deoxyribonucleoside 5'-triphosphate + H2O = a 2'-deoxyribonucleoside 5'-phosphate + diphosphate + H(+). Functionally, nucleoside triphosphate pyrophosphatase. May have a dual role in cell division arrest and in preventing the incorporation of modified nucleotides into cellular nucleic acids. This Helicobacter pylori (strain Shi470) protein is Nucleoside triphosphate pyrophosphatase.